We begin with the raw amino-acid sequence, 71 residues long: Large ribosomal subunit protein bL31 (71 aa).

Residues Cys16, Cys18, Cys37, and Cys40 each coordinate Zn(2+).

Belongs to the bacterial ribosomal protein bL31 family. Type A subfamily. Part of the 50S ribosomal subunit. Zn(2+) is required as a cofactor.

Its function is as follows. Binds the 23S rRNA. The polypeptide is Large ribosomal subunit protein bL31 (Pseudoalteromonas translucida (strain TAC 125)).